Here is a 214-residue protein sequence, read N- to C-terminus: GTP-binding protein ypt3 (214 aa).

A GTP-binding site is contributed by 17–24 (GDSGVGKS). An Effector region motif is present at residues 39–47 (SKSTIGVEF). The residue at position 42 (threonine 42) is a Phosphothreonine. Residues 65–69 (DTAGQ) and 123–126 (NKTD) contribute to the GTP site. 2 S-geranylgeranyl cysteine lipidation sites follow: cysteine 213 and cysteine 214.

Belongs to the small GTPase superfamily. Rab family.

Its subcellular location is the cell membrane. It is found in the endosome membrane. The protein localises to the golgi apparatus membrane. It localises to the cytoplasm. The protein resides in the nucleus. Its function is as follows. Has a role in retrograde traffricking of proteins from the endosome to the Golgi. Involved in the secretory pathway where it has a role in acid phosphatase secretion. In Schizosaccharomyces pombe (strain 972 / ATCC 24843) (Fission yeast), this protein is GTP-binding protein ypt3 (ypt3).